The sequence spans 59 residues: Large ribosomal subunit protein bL32 (59 aa).

The disordered stretch occupies residues 1–59 (MAVQQNKKSPSKRGMHRSHDHLSVAPLAVEPTTGETHLRHHVSPNGYYRGRKVIKTKND). 2 stretches are compositionally biased toward basic residues: residues 9-19 (SPSKRGMHRSH) and 49-59 (RGRKVIKTKND).

This sequence belongs to the bacterial ribosomal protein bL32 family.

In Cupriavidus metallidurans (strain ATCC 43123 / DSM 2839 / NBRC 102507 / CH34) (Ralstonia metallidurans), this protein is Large ribosomal subunit protein bL32.